A 106-amino-acid chain; its full sequence is MICOS complex subunit MIC12 (106 aa).

The helical transmembrane segment at 11–27 (VKWTLSVGVIGSVFYLY) threads the bilayer.

It belongs to the MICOS complex subunit Mic12 family. In terms of assembly, component of the mitochondrial contact site and cristae organizing system (MICOS) complex.

It localises to the mitochondrion inner membrane. Component of the MICOS complex, a large protein complex of the mitochondrial inner membrane that plays crucial roles in the maintenance of crista junctions, inner membrane architecture, and formation of contact sites to the outer membrane. The sequence is that of MICOS complex subunit MIC12 (AIM5) from Saccharomyces cerevisiae (strain RM11-1a) (Baker's yeast).